Consider the following 179-residue polypeptide: Large ribosomal subunit protein uL6 (179 aa).

This sequence belongs to the universal ribosomal protein uL6 family. In terms of assembly, part of the 50S ribosomal subunit.

This protein binds to the 23S rRNA, and is important in its secondary structure. It is located near the subunit interface in the base of the L7/L12 stalk, and near the tRNA binding site of the peptidyltransferase center. The sequence is that of Large ribosomal subunit protein uL6 from Mycolicibacterium vanbaalenii (strain DSM 7251 / JCM 13017 / BCRC 16820 / KCTC 9966 / NRRL B-24157 / PYR-1) (Mycobacterium vanbaalenii).